The chain runs to 287 residues: Chlorophyll a-b binding protein CP29.2, chloroplastic (287 aa).

Residues 1–31 constitute a chloroplast transit peptide; that stretch reads MAATSTAAAASSIMGTRVVSDISSNSSRFTA. R32 is modified (N2-acetylarginine). A Phosphothreonine modification is found at T37. Residue W55 coordinates chlorophyll b. F75 is a binding site for chlorophyll a. A phosphothreonine mark is found at T109 and T111. Residues E137 and H140 each coordinate chlorophyll a. A helical membrane pass occupies residues 143–163; the sequence is WAMLATLGAITVEWLTGVTWQ. Residue L177 participates in chlorophyll a binding. Residues 181 to 201 traverse the membrane as a helical segment; it reads LPFSISTLIWIEVLVIGYIEF. Chlorophyll b-binding residues include E200 and R203. Positions 239, 242, 244, 256, and 271 each coordinate chlorophyll a. The helical transmembrane segment at 245-265 threads the bilayer; it reads LAMVGFLGFAVQAAATGKGPL.

This sequence belongs to the light-harvesting chlorophyll a/b-binding (LHC) protein family. The LHC complex consists of chlorophyll a-b binding proteins. Requires Binds at least 14 chlorophylls (8 Chl-a and 6 Chl-b) and carotenoids such as lutein and neoxanthin. as cofactor. Photoregulated by reversible phosphorylation of its threonine residues.

It localises to the plastid. The protein localises to the chloroplast thylakoid membrane. The light-harvesting complex (LHC) functions as a light receptor, it captures and delivers excitation energy to photosystems with which it is closely associated. In Arabidopsis thaliana (Mouse-ear cress), this protein is Chlorophyll a-b binding protein CP29.2, chloroplastic (LHCB4.2).